We begin with the raw amino-acid sequence, 62 residues long: Sperm protamine P1 (62 aa).

Positions 1 to 62 are disordered; sequence MARYRRHSRS…RYSRRGRRRY (62 aa).

Belongs to the protamine P1 family. In terms of tissue distribution, testis.

It is found in the nucleus. Its subcellular location is the chromosome. In terms of biological role, protamines substitute for histones in the chromatin of sperm during the haploid phase of spermatogenesis. They compact sperm DNA into a highly condensed, stable and inactive complex. This Neophascogale lorentzii (Long-clawed marsupial mouse) protein is Sperm protamine P1 (PRM1).